The sequence spans 481 residues: Abl interactor 1 (481 aa).

An N-acetylalanine modification is found at A2. Residues 18–79 (ALIESYQNLT…NNVLQLLDIQ (62 aa)) form a required for binding to WASF1 region. A t-SNARE coiled-coil homology domain is found at 45–107 (KALEETKAYT…DIHKEKVARR (63 aa)). Residue Y53 is modified to Phosphotyrosine. The interval 158–285 (AKHGNNQPAR…PGAAPGSQYG (128 aa)) is disordered. Residues 161–175 (GNNQPARTGTLSRTN) are compositionally biased toward polar residues. A phosphothreonine mark is found at T174 and T178. Phosphoserine is present on residues S183 and S187. Y213 bears the Phosphotyrosine mark. The residue at position 215 (T215) is a Phosphothreonine. Residues S216, S222, and S225 each carry the phosphoserine modification. Residues 222 to 235 (SQHSPGRTASLNQR) show a composition bias toward polar residues. Composition is skewed to low complexity over residues 248-258 (SRENSGSSSIG) and 272-282 (GPAAPGAAPGS). Residues S292 and S296 each carry the phosphoserine modification. Disordered stretches follow at residues 318–348 (AQPH…LTPQ) and 361–392 (NIAD…PPPV). 2 stretches are compositionally biased toward pro residues: residues 366–376 (PTPPPPPPPDD) and 383–392 (SPPPPPPPPV). One can recognise an SH3 domain in the interval 419–478 (NYIEKVVAIYDYTKDKDDELSFKEGAIIYVIKKNDDGWFEGVCNRVTGLFPGNYVESIMH). Phosphotyrosine is present on Y428. Position 439 is a phosphoserine (S439). At T480 the chain carries Phosphothreonine.

This sequence belongs to the ABI family. In terms of assembly, interacts with ENAH, Abelson murine leukemia virus V-ABL, ABL1, STX1A, SNAP25, VAMP2, and through its N-terminus with WASF1. Part of a complex consisting of ABI1, STX1A and SNAP25. Part of a complex consisting of ABI1, EPS8 and SOS1. Interacts with EPS8, SOS1, SOS2, GRB2, SPTA1, and the first SH3 domain of NCK1. Component of the WAVE2 complex composed of ABI1, CYFIP1/SRA1, NCKAP1/NAP1 (NCKAP1l/HEM1 in hematopoietic cells) and WASF2/WAVE2. Interacts (via SH3 domain) with SHANK2 and SHANK3, but not SHANK1; the interaction is direct. Interacts with the heterodimer MYC:MAX; the interaction may enhance MYC:MAX transcriptional activity. Interacts with FNBP1L (via the SH3 domain), WASF2, and CDC42, but only in the presence of FNBP1L. In terms of processing, phosphorylated on tyrosine residues after serum stimulation or induction by v-Abl. Seems to be phosphorylated at Tyr-53 by ABL1, required for nuclear but not for synaptic localization. In terms of tissue distribution, widely expressed with highest levels in bone marrow, spleen, brain, testes, and embryonic brain. In adult brain prominently expressed in the neocortex, hippocampus and dentate gyrus.

It localises to the cytoplasm. Its subcellular location is the nucleus. It is found in the cell projection. The protein resides in the lamellipodium. The protein localises to the filopodium. It localises to the growth cone. Its subcellular location is the postsynaptic density. It is found in the cytoskeleton. Its function is as follows. May act in negative regulation of cell growth and transformation by interacting with nonreceptor tyrosine kinases ABL1 and/or ABL2. In vitro, at least isoform 2 and isoform 4 suppress the transforming activity of Abelson murine leukemia virus (v-Abl) after overexpression in fibroblasts. May play a role in regulation EGF-induced Erk pathway activation. Involved in cytoskeletal reorganization and EGFR signaling. Together with EPS8 participates in transduction of signals from Ras to Rac. In vitro, a trimeric complex of ABI1, EPS8 and SOS1 exhibits Rac specific guanine nucleotide exchange factor (GEF) activity and ABI1 seems to act as an adapter in the complex. Regulates ABL1/c-Abl-mediated phosphorylation of ENAH. Recruits WASF1 to lamellipodia and there seems to regulate WASF1 protein level. In brain, seems to regulate the dendritic outgrowth and branching as well as to determine the shape and number of synaptic contacts of developing neurons. The polypeptide is Abl interactor 1 (Mus musculus (Mouse)).